The sequence spans 346 residues: Phosphoribosylformylglycinamidine cyclo-ligase (346 aa).

Belongs to the AIR synthase family.

The protein localises to the cytoplasm. It catalyses the reaction 2-formamido-N(1)-(5-O-phospho-beta-D-ribosyl)acetamidine + ATP = 5-amino-1-(5-phospho-beta-D-ribosyl)imidazole + ADP + phosphate + H(+). The protein operates within purine metabolism; IMP biosynthesis via de novo pathway; 5-amino-1-(5-phospho-D-ribosyl)imidazole from N(2)-formyl-N(1)-(5-phospho-D-ribosyl)glycinamide: step 2/2. This Bacillus thuringiensis subsp. konkukian (strain 97-27) protein is Phosphoribosylformylglycinamidine cyclo-ligase.